A 348-amino-acid chain; its full sequence is Endoplasmic reticulum junction formation protein lunapark-A (348 aa).

The Cytoplasmic segment spans residues 1–43; the sequence is MSVFCLQAKPTTVEILEGIDKDIQILEDYSVKYQRQMKAVVGR. The chain crosses the membrane as a helical span at residues 44–64; the sequence is LLLYSILLYLMAGVVVYSWYL. Residues 65-67 are Lumenal-facing; sequence PEQ. A helical membrane pass occupies residues 68–88; that stretch reads LMGRLVLGLPFLLFPLLVWIL. The Cytoplasmic segment spans residues 89 to 348; that stretch reads RKVLILFFAR…EEDKQSDSGD (260 aa). A coiled-coil region spans residues 105 to 126; it reads FKLEDLKAQKRKILEDVMETET. The interval 142-211 is disordered; it reads KKKTDFDSTP…HSAPGGPPER (70 aa). The segment at 277–302 adopts a C4-type; plays a role in ER morphology zinc-finger fold; the sequence is CQQCLSHNGMALKEEFEYVAFRCAYC. Positions 313–348 are disordered; the sequence is PQAPRLPETAGEPKLPCDLNSSSCAAEEDKQSDSGD. Positions 339–348 are enriched in basic and acidic residues; the sequence is EEDKQSDSGD.

It belongs to the lunapark family. In terms of assembly, homodimer; homodimerization requires the C4-type zinc finger motif and decreases during mitosis in a phosphorylation-dependent manner. In terms of processing, phosphorylated. Phosphorylation occurs during interphase. Phosphorylation also occurs during mitosis; these phosphorylations reduce both its homodimerization and the ER three-way tubular junction formation.

It is found in the endoplasmic reticulum membrane. Its function is as follows. Endoplasmic reticulum (ER)-shaping membrane protein that plays a role in determining ER morphology. Involved in the stabilization of nascent three-way ER tubular junctions within the ER network. May also play a role as a curvature-stabilizing protein within three-way ER tubular junction network. This Takifugu rubripes (Japanese pufferfish) protein is Endoplasmic reticulum junction formation protein lunapark-A (lnpka).